The sequence spans 1262 residues: Putative late blight resistance protein homolog R1B-23 (1262 aa).

Coiled coils occupy residues 364 to 384 (DSLA…ESMQ) and 475 to 496 (RMNE…KLLN). Residues 475–761 (RMNEEIVGFE…ISESFIKSCE (287 aa)) enclose the NB-ARC domain. Residue 508–515 (GMPGLGKT) coordinates ATP. 6 LRR repeats span residues 890–914 (FKFL…LFYL), 933–961 (LWNL…VWDM), 1036–1059 (PIRL…CISA), 1064–1083 (YLEL…TADH), 1084–1112 (LKHL…MFPQ), and 1133–1157 (FPNL…FMDI). Residues 1181 to 1248 (ETQVEDNQNT…KLRNVAYADE (68 aa)) form the HMA domain.

The protein belongs to the disease resistance NB-LRR family.

The protein localises to the cytoplasm. Its subcellular location is the membrane. Its function is as follows. Confers resistance to late blight (Phytophthora infestans) races carrying the avirulence gene Avr1. Resistance proteins guard the plant against pathogens that contain an appropriate avirulence protein via an indirect interaction with this avirulence protein. That triggers a defense system including the hypersensitive response, which restricts the pathogen growth. This Solanum demissum (Wild potato) protein is Putative late blight resistance protein homolog R1B-23 (R1B-23).